We begin with the raw amino-acid sequence, 135 residues long: NAD(P)H-quinone oxidoreductase subunit 3 (135 aa).

The next 3 membrane-spanning stretches (helical) occupy residues L15–V35, M79–V99, and L104–A124.

Belongs to the complex I subunit 3 family. As to quaternary structure, NDH-1 can be composed of about 15 different subunits; different subcomplexes with different compositions have been identified which probably have different functions.

It is found in the cellular thylakoid membrane. It catalyses the reaction a plastoquinone + NADH + (n+1) H(+)(in) = a plastoquinol + NAD(+) + n H(+)(out). The catalysed reaction is a plastoquinone + NADPH + (n+1) H(+)(in) = a plastoquinol + NADP(+) + n H(+)(out). Functionally, NDH-1 shuttles electrons from an unknown electron donor, via FMN and iron-sulfur (Fe-S) centers, to quinones in the respiratory and/or the photosynthetic chain. The immediate electron acceptor for the enzyme in this species is believed to be plastoquinone. Couples the redox reaction to proton translocation, and thus conserves the redox energy in a proton gradient. Cyanobacterial NDH-1 also plays a role in inorganic carbon-concentration. This Synechococcus sp. (strain CC9311) protein is NAD(P)H-quinone oxidoreductase subunit 3.